The following is a 1258-amino-acid chain: MARDVDNKQNAKRISRDEDEDEFAGESMVGRTLDNPFLGEDEFEDIFGSESQYISSSGQNSTNPFLADTRIENSPLGSESKANQLNKQGTNVNHIEIPLRDFNDPTQPESFLPPPKNTFTSRIKKIKNLFKKEKKQVKPEDLGPRQIILNDYSANHFLHNAVSTCKYSAFTFLPKFLKEQFSKYANLFFLFTAVVQQIPGITPVNRYTTIGPMLIVLSVSGIKEIMEDIKRKKQDQELNESPCYVLQGTGFVEKQWKDVVVGDIVKIVSETFFPADLVLLSSSEPEGLCYIETANLDGETNLKIKQALPETAGLLKPVELGQLSGEVKSEQPNNNLYTFDATLKLLPSDRELPLSPDQLLLRGAQLRNTPWVYGIVVFTGHESKLMKNTTETPIKRTSVEKQVNSQILFLLCIFVFLCFASSLGALIHRSVYGSALSYVKYTSNRAGMFFKGLLTFWILYSNLVPISLFVTFELVRYIQAQLISSDLDMYNEETDTPAACRTSSLVEELGQVGYIFSDKTGTLTRNQMEFRQCTIAGVAYADVIPEDRQFTSEDLDSDMYIYDFDTLKENLKHSENASLIHQFLLVLSICHTVIPEYDESTNSIKYQASSPDEGALVKGAASIGYKFLARKPHLVTVSIFGKDESYELLHICEFNSTRKRMSIVFRCPDGKIRLYVKGADTVIMERLASDNPYLQTTIHHLEDYATVGLRTLCIAMREVPEDEYQRWSTVFETAASSLVDRAQKLMDAAEEIEKDLILLGATAIEDRLQDGVPDTISTLQTAGIKIWVLTGDRQETAINIGMSCKLIDEDMGLVIVNEETKEATAESVMAKLSSIYRNEATTGNVESMALVIDGVSLTYALDFSLERRFFELASLCRAVICCRVSPLQKALIVKMVKRNTGEVLLAIGDGANDVPMIQAAHVGVGISGMEGLQAVRSSDFSISQFCYLKKLLLVHGSWCYQRLSKLILYSFYKNIALYMTQFWYAFCNAFSGQVIFESWSISLYNVLFTVLPPVVIGIFDQFVSAGQLFQYPQLYQLGQRSEFFNLKRFWSWITNGFYHSLLLFLCSIAVFYYDGPNKDGLASGHWVWGTTLYAAILATVLGKAALISNHWTQYTVIATLGSFLLWIVFMPIYAVAAPAIGFSKEYYGIIPHLYGNLKFWASLLVLPTIALMRDFVWKYSSRMYYPEEYHYVQEIQKYNVTDYRPRIVGFHKAIRKIRQMQRMRKQRGYAFSQGEEDQSRILDAYDTTHTRGAYGEMR.

Disordered stretches follow at residues 1-41 and 53-83; these read MARD…LGED and YISSSGQNSTNPFLADTRIENSPLGSESKAN. Topologically, residues 1-183 are cytoplasmic; it reads MARDVDNKQN…PKFLKEQFSK (183 aa). The segment covering 53-64 has biased composition (polar residues); that stretch reads YISSSGQNSTNP. The chain crosses the membrane as a helical span at residues 184–204; that stretch reads YANLFFLFTAVVQQIPGITPV. Topologically, residues 205-208 are lumenal; sequence NRYT. The helical transmembrane segment at 209–229 threads the bilayer; it reads TIGPMLIVLSVSGIKEIMEDI. At 230 to 406 the chain is on the cytoplasmic side; the sequence is KRKKQDQELN…TSVEKQVNSQ (177 aa). Residues 407 to 427 form a helical membrane-spanning segment; it reads ILFLLCIFVFLCFASSLGALI. Topologically, residues 428–451 are lumenal; sequence HRSVYGSALSYVKYTSNRAGMFFK. A helical membrane pass occupies residues 452-472; that stretch reads GLLTFWILYSNLVPISLFVTF. Residues 473-974 are Cytoplasmic-facing; that stretch reads ELVRYIQAQL…KLILYSFYKN (502 aa). Aspartate 518 serves as the catalytic 4-aspartylphosphate intermediate. Aspartate 518, lysine 519, threonine 520, glutamate 613, phenylalanine 654, serine 656, lysine 659, lysine 677, arginine 710, threonine 711, threonine 790, glycine 791, aspartate 792, arginine 883, and lysine 889 together coordinate ATP. Position 518 (aspartate 518) interacts with Mg(2+). Threonine 520 is a Mg(2+) binding site. Aspartate 909 provides a ligand contact to Mg(2+). Residues asparagine 912 and aspartate 913 each contribute to the ATP site. Aspartate 913 is a Mg(2+) binding site. Residues 975-995 traverse the membrane as a helical segment; that stretch reads IALYMTQFWYAFCNAFSGQVI. The Lumenal segment spans residues 996–998; the sequence is FES. Residues 999-1019 traverse the membrane as a helical segment; it reads WSISLYNVLFTVLPPVVIGIF. Residues 1020 to 1051 lie on the Cytoplasmic side of the membrane; the sequence is DQFVSAGQLFQYPQLYQLGQRSEFFNLKRFWS. Residues 1052–1072 traverse the membrane as a helical segment; sequence WITNGFYHSLLLFLCSIAVFY. At 1073–1086 the chain is on the lumenal side; the sequence is YDGPNKDGLASGHW. A helical membrane pass occupies residues 1087-1107; it reads VWGTTLYAAILATVLGKAALI. A 1,2-diacyl-sn-glycero-3-phospho-(1D-myo-inositol 4-phosphate) is bound at residue lysine 1103. The Cytoplasmic portion of the chain corresponds to 1108-1115; the sequence is SNHWTQYT. The helical transmembrane segment at 1116-1136 threads the bilayer; the sequence is VIATLGSFLLWIVFMPIYAVA. At 1137–1148 the chain is on the lumenal side; it reads APAIGFSKEYYG. A helical transmembrane segment spans residues 1149 to 1169; it reads IIPHLYGNLKFWASLLVLPTI. Over 1170-1258 the chain is Cytoplasmic; sequence ALMRDFVWKY…HTRGAYGEMR (89 aa). Arginine 1173, tryptophan 1177, lysine 1178, tyrosine 1189, and histidine 1190 together coordinate a 1,2-diacyl-sn-glycero-3-phospho-(1D-myo-inositol 4-phosphate).

The protein belongs to the cation transport ATPase (P-type) (TC 3.A.3) family. Type IV subfamily. Requires Mg(2+) as cofactor.

It localises to the endoplasmic reticulum membrane. Its subcellular location is the golgi apparatus. The protein localises to the trans-Golgi network membrane. The catalysed reaction is ATP + H2O + phospholipidSide 1 = ADP + phosphate + phospholipidSide 2.. It carries out the reaction a 1,2-diacyl-sn-glycero-3-phospho-L-serine(out) + ATP + H2O = a 1,2-diacyl-sn-glycero-3-phospho-L-serine(in) + ADP + phosphate + H(+). The enzyme catalyses a 1,2-diacyl-sn-glycero-3-phosphoethanolamine(out) + ATP + H2O = a 1,2-diacyl-sn-glycero-3-phosphoethanolamine(in) + ADP + phosphate + H(+). In terms of biological role, catalytic component of a P4-ATPase flippase complex which catalyzes the hydrolysis of ATP coupled to the transport of phosphatidylserine and small amounts of ethanolamine from the lumen to the cytosolic leaflet of the trans-Golgi network and ensures the maintenance of asymmetric distribution of phospholipids. In Schizosaccharomyces pombe (strain 972 / ATCC 24843) (Fission yeast), this protein is Phospholipid-transporting ATPase C887.12.